We begin with the raw amino-acid sequence, 361 residues long: Hydroxymethylglutaryl-CoA synthase (361 aa).

The active-site Proton donor/acceptor is E92. The active-site Acyl-thioester intermediate is C124. (3S)-3-hydroxy-3-methylglutaryl-CoA is bound by residues C124, S165, T214, and H247. Catalysis depends on H247, which acts as the Proton donor/acceptor. K252 serves as a coordination point for CoA. K256, N279, and S309 together coordinate (3S)-3-hydroxy-3-methylglutaryl-CoA.

This sequence belongs to the thiolase-like superfamily. Archaeal HMG-CoA synthase family. In terms of assembly, interacts with acetoacetyl-CoA thiolase that catalyzes the precedent step in the pathway and with a DUF35 protein. The acetoacetyl-CoA thiolase/HMG-CoA synthase complex channels the intermediate via a fused CoA-binding site, which allows for efficient coupling of the endergonic thiolase reaction with the exergonic HMGCS reaction.

The enzyme catalyses acetoacetyl-CoA + acetyl-CoA + H2O = (3S)-3-hydroxy-3-methylglutaryl-CoA + CoA + H(+). It participates in metabolic intermediate biosynthesis; (R)-mevalonate biosynthesis; (R)-mevalonate from acetyl-CoA: step 2/3. Functionally, catalyzes the condensation of acetyl-CoA with acetoacetyl-CoA to form 3-hydroxy-3-methylglutaryl-CoA (HMG-CoA). Functions in the mevalonate (MVA) pathway leading to isopentenyl diphosphate (IPP), a key precursor for the biosynthesis of isoprenoid compounds that are building blocks of archaeal membrane lipids. This Aeropyrum pernix (strain ATCC 700893 / DSM 11879 / JCM 9820 / NBRC 100138 / K1) protein is Hydroxymethylglutaryl-CoA synthase.